We begin with the raw amino-acid sequence, 279 residues long: Early nodulin-like protein 18 (279 aa).

The first 24 residues, 1 to 24 (MAGAVATVSVGLAWLGLMAAAASA), serve as a signal peptide directing secretion. Residues 25–133 (TQFRVGGGRG…GEKLVVVVMA (109 aa)) enclose the Phytocyanin domain. A disulfide bridge connects residues Cys82 and Cys121. N-linked (GlcNAc...) asparagine glycosylation is present at Asn83. The tract at residues 138 to 256 (RHAPPPSPPA…ANDRSGAAAA (119 aa)) is disordered. Over residues 140 to 168 (APPPSPPAVPPPVAPVPMPSPASSPPSPA) the composition is skewed to pro residues. Over residues 169–185 (PAAATPSLAPSPVATTP) the composition is skewed to low complexity. Positions 186–199 (SPSPSVSPMAPAPA) are enriched in pro residues. 2 stretches are compositionally biased toward low complexity: residues 212-226 (AAMA…GGVA) and 234-256 (TDGA…AAAA). The N-linked (GlcNAc...) asparagine glycan is linked to Asn238. A lipid anchor (GPI-anchor amidated serine) is attached at Ser251. The propeptide at 252 to 279 (GAAAAAPVVAGVVVTSLGAYIGYAMLAI) is removed in mature form.

The protein belongs to the early nodulin-like (ENODL) family. As to expression, specifically expressed in reproductive tissues. Mainly observed in developing seeds and in mature leaves.

The protein localises to the cell membrane. Its function is as follows. May act as a carbohydrate transporter. Promotes tolerance to salt stress in a redox-dependent manner. This Oryza sativa subsp. japonica (Rice) protein is Early nodulin-like protein 18.